The following is a 398-amino-acid chain: Trans-2-enoyl-CoA reductase [NADH] (398 aa).

Residues 47 to 52, 74 to 75, 111 to 112, and 139 to 140 each bind NAD(+); these read GASSGF, YE, DA, and LA. Tyr-225 is a binding site for substrate. Catalysis depends on Tyr-235, which acts as the Proton donor. NAD(+)-binding positions include Lys-244 and 274–276; that span reads LVT.

The protein belongs to the TER reductase family. As to quaternary structure, monomer.

It carries out the reaction a 2,3-saturated acyl-CoA + NAD(+) = a (2E)-enoyl-CoA + NADH + H(+). Its pathway is lipid metabolism; fatty acid biosynthesis. In terms of biological role, involved in the fatty acid synthesis (FAS II). Catalyzes the reduction of the carbon-carbon double bond of crotonyl-CoA to yield butyryl-CoA. In Clostridium acetobutylicum (strain ATCC 824 / DSM 792 / JCM 1419 / IAM 19013 / LMG 5710 / NBRC 13948 / NRRL B-527 / VKM B-1787 / 2291 / W), this protein is Trans-2-enoyl-CoA reductase [NADH].